We begin with the raw amino-acid sequence, 208 residues long: Protein-L-isoaspartate O-methyltransferase (208 aa).

The active site involves Ser-59.

The protein belongs to the methyltransferase superfamily. L-isoaspartyl/D-aspartyl protein methyltransferase family.

Its subcellular location is the cytoplasm. It catalyses the reaction [protein]-L-isoaspartate + S-adenosyl-L-methionine = [protein]-L-isoaspartate alpha-methyl ester + S-adenosyl-L-homocysteine. Catalyzes the methyl esterification of L-isoaspartyl residues in peptides and proteins that result from spontaneous decomposition of normal L-aspartyl and L-asparaginyl residues. It plays a role in the repair and/or degradation of damaged proteins. In Shigella sonnei (strain Ss046), this protein is Protein-L-isoaspartate O-methyltransferase.